A 335-amino-acid polypeptide reads, in one-letter code: MYPLARRILFALDAEKAHHFTLDALYTVYKLGLIPVTDNRTKPVKLMGMDLPNPVGLAAGLDKNGEYIDALGALGFGFIEIGTVTPNPQPGNPQPRLFRVPEHQGIINRMGFNNHGIDTMIRNIEKSKFSGVLGINIGKNAVTPIENAADDYLICLEKAYAHASYITVNISSPNTKNLRALQGGDELSALLEALKNKQAQLASVHGKYVPLAVKIAPDLDEAQIEDIAHVVKSVEMDGIIATNTTIDKSSLGSHPLAGEQGGLSGLPVHEKSNRVLKLLADHIDGKLPIIGVGGIMEGEDSADKIRLGATAVQVYSGLIYKGPALVKECLKALAR.

Residues 59–63 (AGLDK) and Thr-83 each bind FMN. Lys-63 provides a ligand contact to substrate. Residue 108-112 (NRMGF) coordinates substrate. Positions 136 and 169 each coordinate FMN. Asn-169 is a binding site for substrate. Residue Ser-172 is the Nucleophile of the active site. A substrate-binding site is contributed by Asn-174. The FMN site is built by Lys-214 and Thr-242. 243–244 (NT) is a binding site for substrate. Residues Gly-265, Gly-294, and 315-316 (YS) contribute to the FMN site.

It belongs to the dihydroorotate dehydrogenase family. Type 2 subfamily. Monomer. The cofactor is FMN.

The protein localises to the cell membrane. It carries out the reaction (S)-dihydroorotate + a quinone = orotate + a quinol. Its pathway is pyrimidine metabolism; UMP biosynthesis via de novo pathway; orotate from (S)-dihydroorotate (quinone route): step 1/1. Functionally, catalyzes the conversion of dihydroorotate to orotate with quinone as electron acceptor. This chain is Dihydroorotate dehydrogenase (quinone), found in Neisseria meningitidis serogroup B (strain ATCC BAA-335 / MC58).